A 380-amino-acid polypeptide reads, in one-letter code: Glucose-1-phosphate adenylyltransferase (380 aa).

Residues glycine 164, 179 to 180 (EK), and serine 190 contribute to the alpha-D-glucose 1-phosphate site.

This sequence belongs to the bacterial/plant glucose-1-phosphate adenylyltransferase family. In terms of assembly, homotetramer.

The enzyme catalyses alpha-D-glucose 1-phosphate + ATP + H(+) = ADP-alpha-D-glucose + diphosphate. Its pathway is glycan biosynthesis; glycogen biosynthesis. In terms of biological role, involved in the biosynthesis of ADP-glucose, a building block required for the elongation reactions to produce glycogen. Catalyzes the reaction between ATP and alpha-D-glucose 1-phosphate (G1P) to produce pyrophosphate and ADP-Glc. The chain is Glucose-1-phosphate adenylyltransferase from Streptococcus pneumoniae serotype 2 (strain D39 / NCTC 7466).